A 262-amino-acid chain; its full sequence is Endoplasmic reticulum chaperone BiP (262 aa).

Residue 8-11 (GSTR) coordinates ATP. Residues 53–63 (QDTGDLVLLDV) form an interdomain linker region. Positions 64–144 (CPLTLGIETV…PRGVPQIEVT (81 aa)) are substrate-binding (SBD). The residue at position 91 (K91) is an N6-succinyllysine. R136 carries the post-translational modification Omega-N-methylarginine. Position 162 is an O-AMP-threonine; alternate (T162). Phosphothreonine; alternate is present on T162. Position 229 is an N6,N6,N6-trimethyllysine; by METTL21A; in vitro (K229). At K229 the chain carries N6,N6-dimethyllysine; alternate. Position 229 is an N6-methyllysine; alternate (K229). K235 carries the post-translational modification N6-methyllysine.

It belongs to the heat shock protein 70 family. In terms of assembly, monomer and homooligomer; homooligomerization via the interdomain linker inactivates the chaperone activity and acts as a storage of HSPA5/BiP molecules. Interacts with DNAJC1 (via J domain). Component of an EIF2 complex at least composed of CELF1/CUGBP1, CALR, CALR3, EIF2S1, EIF2S2, HSP90B1 and HSPA5. Part of a large chaperone multiprotein complex comprising DNAJB11, HSP90B1, HSPA5, HYOU, PDIA2, PDIA4, PDIA6, PPIB, SDF2L1, UGGT1 and very small amounts of ERP29, but not, or at very low levels, CALR nor CANX. Interacts with TMEM132A and TRIM21. May form a complex with ERLEC1, OS9, SEL1L and SYVN1. Interacts with DNAJC10. Interacts with DNAJB9/ERdj4; leading to recruit HSPA5/BiP to ERN1/IRE1. Interacts with ERN1/IRE1 (via luminal domain); the interaction takes place following interaction with DNAJB9/ERdj4 and leads to inactivate ERN1/IRE1, the interaction also competitively inhibits ERN1 interaction with MANF. Interacts directly with MANF (via SAP domain); the interaction inhibits ATP binding to HSPA5/BiP and subsequent nucleotide exchange. Interacts with EIF2AK3/PERK (via luminal domain); interaction leads to inactivate EIF2AK3/PERK. Interacts with MX1. Interacts with METTL23. Interacts with CEMIP; the interaction induces calcium leakage from the endoplasmic reticulum and cell migration. Interacts with PCSK4 form; the interaction takes place in the endoplasmic reticulum. Interacts with CIPC. Interacts with CCDC88B (via C-terminus); the interaction opposes ERN1-mediated JNK activation, protecting against apoptosis. Interacts with INPP5K; necessary for INPP5K localization at the endoplasmic reticulum. Interacts with MANF; the interaction is direct. Interacts with LOXL2; leading to activate the ERN1/IRE1-XBP1 pathway of the unfolded protein response. Interacts with CLU under stressed condition; interaction increases CLU protein stability; facilitates its retrotranslocation and redistribution to the mitochondria; cooperatively suppress stress-induced apoptosis by stabilizing mitochondrial membrane integrity. Interacts with CCDC47. Interacts with CLN3. Interacts with ELAPOR1; may regulate the function of HSPA5 in apoptosis and cell proliferation. Interacts with CASP7. Interacts with ILDR2; the interaction stabilizes ILDR2 expression. Interacts with ADAM7. In unstressed cells, AMPylation at Thr-162 by FICD inactivates the chaperome activity: AMPylated form is locked in a relatively inert state and only weakly stimulated by J domain-containing proteins. In response to endoplasmic reticulum stress, de-AMPylation by the same protein, FICD, restores the chaperone activity.

Its subcellular location is the endoplasmic reticulum lumen. The protein resides in the melanosome. The protein localises to the cytoplasm. It localises to the cell surface. It catalyses the reaction ATP + H2O = ADP + phosphate + H(+). With respect to regulation, the chaperone activity is regulated by ATP-induced allosteric coupling of the nucleotide-binding (NBD) and substrate-binding (SBD) domains. In the ADP-bound and nucleotide-free (apo) states, the two domains have little interaction. In contrast, in the ATP-bound state the two domains are tightly coupled, which results in drastically accelerated kinetics in both binding and release of polypeptide substrates. J domain-containing co-chaperones (DNAJB9/ERdj4 or DNAJC10/ERdj5) stimulate the ATPase activity and are required for efficient substrate recognition by HSPA5/BiP. Homooligomerization inactivates participating HSPA5/BiP protomers and probably act as reservoirs to store HSPA5/BiP molecules when they are not needed by the cell. Endoplasmic reticulum chaperone that plays a key role in protein folding and quality control in the endoplasmic reticulum lumen. Involved in the correct folding of proteins and degradation of misfolded proteins via its interaction with DNAJC10/ERdj5, probably to facilitate the release of DNAJC10/ERdj5 from its substrate. Acts as a key repressor of the EIF2AK3/PERK and ERN1/IRE1-mediated unfolded protein response (UPR). In the unstressed endoplasmic reticulum, recruited by DNAJB9/ERdj4 to the luminal region of ERN1/IRE1, leading to disrupt the dimerization of ERN1/IRE1, thereby inactivating ERN1/IRE1. Also binds and inactivates EIF2AK3/PERK in unstressed cells. Accumulation of misfolded protein in the endoplasmic reticulum causes release of HSPA5/BiP from ERN1/IRE1 and EIF2AK3/PERK, allowing their homodimerization and subsequent activation. Plays an auxiliary role in post-translational transport of small presecretory proteins across endoplasmic reticulum (ER). May function as an allosteric modulator for SEC61 channel-forming translocon complex, likely cooperating with SEC62 to enable the productive insertion of these precursors into SEC61 channel. Appears to specifically regulate translocation of precursors having inhibitory residues in their mature region that weaken channel gating. May also play a role in apoptosis and cell proliferation. This chain is Endoplasmic reticulum chaperone BiP, found in Sus scrofa (Pig).